We begin with the raw amino-acid sequence, 527 residues long: Peptide chain release factor 3 (527 aa).

Residues 9-278 (NKRRTFAIIS…GLTQWAPKPQ (270 aa)) form the tr-type G domain. GTP is bound by residues 18–25 (SHPDAGKT), 86–90 (DTPGH), and 140–143 (NKLD).

This sequence belongs to the TRAFAC class translation factor GTPase superfamily. Classic translation factor GTPase family. PrfC subfamily.

Its subcellular location is the cytoplasm. Increases the formation of ribosomal termination complexes and stimulates activities of RF-1 and RF-2. It binds guanine nucleotides and has strong preference for UGA stop codons. It may interact directly with the ribosome. The stimulation of RF-1 and RF-2 is significantly reduced by GTP and GDP, but not by GMP. The sequence is that of Peptide chain release factor 3 from Haemophilus influenzae (strain 86-028NP).